A 295-amino-acid polypeptide reads, in one-letter code: Acetyl-coenzyme A carboxylase carboxyl transferase subunit beta (295 aa).

The disordered stretch occupies residues 1-20 (MSWLSKLMPSGIRTENTPAK). The CoA carboxyltransferase N-terminal domain occupies 28 to 295 (LWEKCSNCGS…QPHPQDADAA (268 aa)). Residues C32, C35, C51, and C54 each contribute to the Zn(2+) site. The C4-type zinc finger occupies 32–54 (CSNCGSALYGPELEENLEVCPKC).

It belongs to the AccD/PCCB family. Acetyl-CoA carboxylase is a heterohexamer composed of biotin carboxyl carrier protein (AccB), biotin carboxylase (AccC) and two subunits each of ACCase subunit alpha (AccA) and ACCase subunit beta (AccD). Requires Zn(2+) as cofactor.

It is found in the cytoplasm. It carries out the reaction N(6)-carboxybiotinyl-L-lysyl-[protein] + acetyl-CoA = N(6)-biotinyl-L-lysyl-[protein] + malonyl-CoA. It functions in the pathway lipid metabolism; malonyl-CoA biosynthesis; malonyl-CoA from acetyl-CoA: step 1/1. In terms of biological role, component of the acetyl coenzyme A carboxylase (ACC) complex. Biotin carboxylase (BC) catalyzes the carboxylation of biotin on its carrier protein (BCCP) and then the CO(2) group is transferred by the transcarboxylase to acetyl-CoA to form malonyl-CoA. This is Acetyl-coenzyme A carboxylase carboxyl transferase subunit beta from Xanthomonas axonopodis pv. citri (strain 306).